Consider the following 119-residue polypeptide: MNTREIGNEYEDKSVEILVKEDYKILERNYQNKFGEIDIIAEKNKEIIFIEVKYRKTNKFGYGYEAVDRRKIMKILKLANYYIQSKKYQDYKIRFDCMSYLGDELDWIKNIVWGDEVGF.

This sequence belongs to the UPF0102 family.

In Fusobacterium nucleatum subsp. nucleatum (strain ATCC 25586 / DSM 15643 / BCRC 10681 / CIP 101130 / JCM 8532 / KCTC 2640 / LMG 13131 / VPI 4355), this protein is UPF0102 protein FN1370.